We begin with the raw amino-acid sequence, 98 residues long: High mobility group nucleosome-binding domain-containing protein 3 (98 aa).

Basic and acidic residues-rich tracts occupy residues 1-25, 39-52, 61-71, and 80-98; these read MPKRKSPEGAEGKDAAKVTKQEPTR, PEPKPRKTTKKEPG, GKKDEKQEAAK, and GENKAEEAQKTESVGDKNE. A disordered region spans residues 1-98; that stretch reads MPKRKSPEGA…KTESVGDKNE (98 aa).

The protein belongs to the HMGN family.

Its subcellular location is the nucleus. The polypeptide is High mobility group nucleosome-binding domain-containing protein 3 (HMGN3) (Gallus gallus (Chicken)).